A 288-amino-acid polypeptide reads, in one-letter code: DNA repair protein RecO (288 aa).

Belongs to the RecO family.

In terms of biological role, involved in DNA repair and RecF pathway recombination. The polypeptide is DNA repair protein RecO (Trichodesmium erythraeum (strain IMS101)).